The sequence spans 450 residues: Gastrin/cholecystokinin type B receptor (450 aa).

The Extracellular segment spans residues 1-57 (MELLKLNSSVQGPGPGSGSSLCHPGVSLLNSSSAGNLSCEPPRIRGTGTRELELAIR). 3 N-linked (GlcNAc...) asparagine glycosylation sites follow: Asn7, Asn30, and Asn36. Residues 58–79 (ITLYAVIFLMSIGGNMLIIVVL) traverse the membrane as a helical segment. Residues 80 to 87 (GLSRRLRT) lie on the Cytoplasmic side of the membrane. Residues 88–109 (VTNAFLLSLAVSDLLLAVACMP) traverse the membrane as a helical segment. The Extracellular portion of the chain corresponds to 110–131 (FTLLPNLMGTFIFGTVICKAVS). Residues Cys127 and Cys205 are joined by a disulfide bond. The helical transmembrane segment at 132–150 (YLMGVSVSVSTLNLVAIAL) threads the bilayer. Residues 151-170 (ERYSAICRPLQARVWQTRSH) are Cytoplasmic-facing. The helical transmembrane segment at 171–189 (AARVILATWLLSGLLMVPY) threads the bilayer. The Extracellular segment spans residues 190-219 (PVYTVVQPVGPRVLQCMHRWPSARVRQTWS). Residues 220 to 242 (VLLLMLLFFIPGVVMAVAYGLIS) traverse the membrane as a helical segment. Over 243–336 (RELYLGLRFD…KLLAKKRVVR (94 aa)) the chain is Cytoplasmic. Residues 258–277 (DTQSRVRNQGGLPGGTAPGP) form a disordered region. A helical transmembrane segment spans residues 337–358 (MLLVIVLLFFLCWLPIYSANTW). Topologically, residues 359–376 (CAFDGPGAHRALSGAPIS) are extracellular. The helical transmembrane segment at 377-397 (FIHLLSYASACVNPLVYCFMH) threads the bilayer. At 398–450 (RRFRQACLDTCARCCPRPPRARPRPLPDEDPPTPSIASLSRLSYTTISTLGPG) the chain is on the cytoplasmic side. Cys411 carries S-palmitoyl cysteine lipidation.

It belongs to the G-protein coupled receptor 1 family. In terms of tissue distribution, stomach and brain.

The protein localises to the cell membrane. Its function is as follows. Receptor for gastrin and cholecystokinin. The CCK-B receptors occur throughout the central nervous system where they modulate anxiety, analgesia, arousal, and neuroleptic activity. This receptor mediates its action by association with G proteins that activate a phosphatidylinositol-calcium second messenger system. The protein is Gastrin/cholecystokinin type B receptor (CCKBR) of Mastomys natalensis (African soft-furred rat).